The following is a 263-amino-acid chain: Acetylglutamate kinase (263 aa).

Substrate-binding positions include 49–50, R71, and N163; that span reads GG.

The protein belongs to the acetylglutamate kinase family. ArgB subfamily.

It is found in the cytoplasm. The catalysed reaction is N-acetyl-L-glutamate + ATP = N-acetyl-L-glutamyl 5-phosphate + ADP. It participates in amino-acid biosynthesis; L-arginine biosynthesis; N(2)-acetyl-L-ornithine from L-glutamate: step 2/4. Catalyzes the ATP-dependent phosphorylation of N-acetyl-L-glutamate. This is Acetylglutamate kinase from Moritella abyssi.